A 350-amino-acid chain; its full sequence is Sterol-4-alpha-carboxylate 3-dehydrogenase ERG26, decarboxylating (350 aa).

NADP(+)-binding positions include 12–18 (GGSGFLG), 63–64 (DL), and 85–87 (SAS). Residues serine 125 and tyrosine 152 each contribute to the substrate site. NADP(+) is bound by residues tyrosine 152, lysine 156, and 179–182 (PAGI). The Proton donor role is filled by lysine 156.

It belongs to the 3-beta-HSD family. In terms of assembly, heterotetramer of ERG25, ERG26, ERG27 and ERG28. ERG28 acts as a scaffold to tether ERG27 and other 4,4-demethylation-related enzymes, forming a demethylation enzyme complex, in the endoplasmic reticulum.

It localises to the endoplasmic reticulum membrane. It catalyses the reaction 4beta-methylzymosterol-4alpha-carboxylate + NADP(+) = 3-dehydro-4-methylzymosterol + CO2 + NADPH. Its pathway is steroid biosynthesis; zymosterol biosynthesis; zymosterol from lanosterol: step 4/6. Functionally, sterol-4-alpha-carboxylate 3-dehydrogenase; part of the third module of ergosterol biosynthesis pathway that includes the late steps of the pathway. ERG26 is a catalytic component of the C-4 demethylation complex that catalyzes the oxidative decarboxylation that results in a reduction of the 3-beta-hydroxy group at the C-3 carbon to an oxo group. The third module or late pathway involves the ergosterol synthesis itself through consecutive reactions that mainly occur in the endoplasmic reticulum (ER) membrane. Firstly, the squalene synthase ERG9 catalyzes the condensation of 2 farnesyl pyrophosphate moieties to form squalene, which is the precursor of all steroids. Squalene synthase is crucial for balancing the incorporation of farnesyl diphosphate (FPP) into sterol and nonsterol isoprene synthesis. Secondly, the squalene epoxidase ERG1 catalyzes the stereospecific oxidation of squalene to (S)-2,3-epoxysqualene, which is considered to be a rate-limiting enzyme in steroid biosynthesis. Then, the lanosterol synthase ERG7 catalyzes the cyclization of (S)-2,3 oxidosqualene to lanosterol, a reaction that forms the sterol core. In the next steps, lanosterol is transformed to zymosterol through a complex process involving various demethylation, reduction and desaturation reactions. The lanosterol 14-alpha-demethylase ERG11 (also known as CYP51) catalyzes C14-demethylation of lanosterol to produce 4,4'-dimethyl cholesta-8,14,24-triene-3-beta-ol, which is critical for ergosterol biosynthesis. The C-14 reductase ERG24 reduces the C14=C15 double bond of 4,4-dimethyl-cholesta-8,14,24-trienol to produce 4,4-dimethyl-cholesta-8,24-dienol. 4,4-dimethyl-cholesta-8,24-dienol is substrate of the C-4 demethylation complex ERG25-ERG26-ERG27 in which ERG25 catalyzes the three-step monooxygenation required for the demethylation of 4,4-dimethyl and 4alpha-methylsterols, ERG26 catalyzes the oxidative decarboxylation that results in a reduction of the 3-beta-hydroxy group at the C-3 carbon to an oxo group, and ERG27 is responsible for the reduction of the keto group on the C-3. ERG28 has a role as a scaffold to help anchor ERG25, ERG26 and ERG27 to the endoplasmic reticulum and ERG29 regulates the activity of the iron-containing C4-methylsterol oxidase ERG25. Then, the sterol 24-C-methyltransferase ERG6 catalyzes the methyl transfer from S-adenosyl-methionine to the C-24 of zymosterol to form fecosterol. The C-8 sterol isomerase ERG2 catalyzes the reaction which results in unsaturation at C-7 in the B ring of sterols and thus converts fecosterol to episterol. The sterol-C5-desaturase ERG3 then catalyzes the introduction of a C-5 double bond in the B ring to produce 5-dehydroepisterol. The C-22 sterol desaturase ERG5 further converts 5-dehydroepisterol into ergosta-5,7,22,24(28)-tetraen-3beta-ol by forming the C-22(23) double bond in the sterol side chain. Finally, ergosta-5,7,22,24(28)-tetraen-3beta-ol is substrate of the C-24(28) sterol reductase ERG4 to produce ergosterol. In Candida albicans (strain SC5314 / ATCC MYA-2876) (Yeast), this protein is Sterol-4-alpha-carboxylate 3-dehydrogenase ERG26, decarboxylating.